We begin with the raw amino-acid sequence, 1153 residues long: Nitric oxide synthase, inducible (1153 aa).

Residues 23 to 27 (DINNN) carry the DINNN-motif; mediates interaction with SPSB1, SPSB2 and SPSB4 motif. Residues C110 and C115 each contribute to the Zn(2+) site. Position 118 (S118) interacts with (6R)-L-erythro-5,6,7,8-tetrahydrobiopterin. A heme b-binding site is contributed by C200. The residue at position 234 (S234) is a Phosphoserine; by PKA. The L-arginine site is built by Q263, W372, Y373, and E377. (6R)-L-erythro-5,6,7,8-tetrahydrobiopterin-binding residues include R381, I462, W463, and F476. Y491 serves as a coordination point for heme b. The calmodulin-binding stretch occupies residues 515-535 (LKVLVKAVLFACMLMRKTMAS). The 139-residue stretch at 539–677 (VTILFATETG…AFRSWAVQTF (139 aa)) folds into the Flavodoxin-like domain. Positions 545, 546, 547, 549, and 550 each coordinate FMN. Y575 carries the phosphotyrosine modification. At S578 the chain carries Phosphoserine; by PKA. FMN is bound by residues S591, T592, S628, R633, C635, E661, and Q665. An FAD-binding FR-type domain is found at 730-970 (KNVFTMRLKS…VRNASGFHLP (241 aa)). R750 lines the NADP(+) pocket. Residue H772 participates in FAD binding. Position 892 is a phosphoserine; by PKA (S892). FAD contacts are provided by R906, Y908, S909, T924, and A926. T929 contributes to the NADP(+) binding site. Y930, V943, C944, and S945 together coordinate FAD. The NADP(+) site is built by T984, R1017, S1046, R1047, K1053, Y1055, Q1057, and D1090.

The protein belongs to the NOS family. As to quaternary structure, homodimer. Interacts with NHERF1. Interacts with GAPDH; induced by oxidatively-modified low-densitity lipoprotein (LDL(ox)). Interacts with S100A8 and S100A9 to form the iNOS-S100A8/9 transnitrosylase complex. Interacts with SPSB1, SPSB2 and SPSB4. Interacts with ELOC and CUL5 in the presence of SPSB1 or SPSB2 or SPSB4. Forms a complex with ASL, ASS1 and HSP90AA1; the complex regulates cell-autonomous L-arginine synthesis and citrulline recycling while channeling extracellular L-arginine to nitric oxide synthesis pathway. Requires heme b as cofactor. The cofactor is FAD. It depends on FMN as a cofactor. (6R)-L-erythro-5,6,7,8-tetrahydrobiopterin serves as cofactor. Polyubiquitinated; mediated by SPSB1, SPSB2 and SPSB4, leading to proteasomal degradation. Expressed in the liver, retina, bone cells and airway epithelial cells of the lung. Not expressed in the platelets. Expressed in chondrocytes.

Its subcellular location is the cytoplasm. The protein localises to the cytosol. The enzyme catalyses 2 L-arginine + 3 NADPH + 4 O2 + H(+) = 2 L-citrulline + 2 nitric oxide + 3 NADP(+) + 4 H2O. Its activity is regulated as follows. Regulated by calcium/calmodulin. Aspirin inhibits expression and function of this enzyme and effects may be exerted at the level of translational/post-translational modification and directly on the catalytic activity. Functionally, produces nitric oxide (NO) which is a messenger molecule with diverse functions throughout the body. In macrophages, NO mediates tumoricidal and bactericidal actions. Also has nitrosylase activity and mediates cysteine S-nitrosylation of cytoplasmic target proteins such PTGS2/COX2. As component of the iNOS-S100A8/9 transnitrosylase complex involved in the selective inflammatory stimulus-dependent S-nitrosylation of GAPDH on 'Cys-247' implicated in regulation of the GAIT complex activity and probably multiple targets including ANXA5, EZR, MSN and VIM. Involved in inflammation, enhances the synthesis of pro-inflammatory mediators such as IL6 and IL8. The protein is Nitric oxide synthase, inducible of Homo sapiens (Human).